The chain runs to 101 residues: Thyrotropin subunit beta (101 aa).

Intrachain disulfides connect Cys2-Cys88, Cys10-Cys66, Cys14-Cys68, and Cys71-Cys78. N-linked (GlcNAc...) asparagine glycosylation is present at Asn6.

It belongs to the glycoprotein hormones subunit beta family. Heterodimer of a common alpha chain and a unique beta chain which confers biological specificity to thyrotropin, lutropin, follitropin and gonadotropin.

It is found in the secreted. Indispensable for the control of thyroid structure and metabolism. In Phodopus sungorus (Striped hairy-footed hamster), this protein is Thyrotropin subunit beta (TSHB).